Consider the following 185-residue polypeptide: ATP-dependent protease subunit HslV (185 aa).

Threonine 2 is an active-site residue. Residues glycine 157, cysteine 160, and threonine 163 each coordinate Na(+).

This sequence belongs to the peptidase T1B family. HslV subfamily. As to quaternary structure, a double ring-shaped homohexamer of HslV is capped on each side by a ring-shaped HslU homohexamer. The assembly of the HslU/HslV complex is dependent on binding of ATP.

The protein localises to the cytoplasm. The catalysed reaction is ATP-dependent cleavage of peptide bonds with broad specificity.. With respect to regulation, allosterically activated by HslU binding. Protease subunit of a proteasome-like degradation complex believed to be a general protein degrading machinery. This chain is ATP-dependent protease subunit HslV, found in Idiomarina loihiensis (strain ATCC BAA-735 / DSM 15497 / L2-TR).